We begin with the raw amino-acid sequence, 68 residues long: U1-hexatoxin-Hv1a (68 aa).

5 disulfide bridges follow: Cys-3–Cys-14, Cys-8–Cys-22, Cys-13–Cys-48, Cys-32–Cys-56, and Cys-50–Cys-63.

It belongs to the MIT-like AcTx family. Expressed by the venom gland.

It localises to the secreted. This chain is U1-hexatoxin-Hv1a, found in Hadronyche versuta (Blue mountains funnel-web spider).